The sequence spans 488 residues: Ribulose bisphosphate carboxylase large chain (488 aa).

Asparagine 127 and threonine 177 together coordinate substrate. Lysine 179 (proton acceptor) is an active-site residue. Substrate is bound at residue lysine 181. Mg(2+)-binding residues include lysine 205, aspartate 207, and glutamate 208. Lysine 205 is subject to N6-carboxylysine. The active-site Proton acceptor is histidine 297. The substrate site is built by arginine 298, histidine 330, and serine 382.

It belongs to the RuBisCO large chain family. Type I subfamily. In terms of assembly, heterohexadecamer of 8 large chains and 8 small chains. Mg(2+) serves as cofactor.

It localises to the plastid. It is found in the chloroplast. It carries out the reaction 2 (2R)-3-phosphoglycerate + 2 H(+) = D-ribulose 1,5-bisphosphate + CO2 + H2O. The enzyme catalyses D-ribulose 1,5-bisphosphate + O2 = 2-phosphoglycolate + (2R)-3-phosphoglycerate + 2 H(+). In terms of biological role, ruBisCO catalyzes two reactions: the carboxylation of D-ribulose 1,5-bisphosphate, the primary event in carbon dioxide fixation, as well as the oxidative fragmentation of the pentose substrate in the photorespiration process. Both reactions occur simultaneously and in competition at the same active site. The sequence is that of Ribulose bisphosphate carboxylase large chain from Emiliania huxleyi (Coccolithophore).